A 354-amino-acid chain; its full sequence is Envelope protein US28 (354 aa).

Over Met-1–Leu-37 the chain is Extracellular. Asn-30 carries N-linked (GlcNAc...) asparagine; by host glycosylation. Residues Phe-38–Ile-58 form a helical membrane-spanning segment. At Thr-59–Asp-69 the chain is on the cytoplasmic side. Residues Val-70–Met-90 form a helical membrane-spanning segment. The Extracellular portion of the chain corresponds to Gln-91 to Ser-101. The chain crosses the membrane as a helical span at residues Val-102 to Ile-122. Topologically, residues Thr-123–Cys-145 are cytoplasmic. The chain crosses the membrane as a helical span at residues Leu-146–Val-166. At Thr-167–Ser-183 the chain is on the extracellular side. A helical membrane pass occupies residues Tyr-184–Ile-204. The Cytoplasmic portion of the chain corresponds to Ser-205 to Arg-228. The chain crosses the membrane as a helical span at residues Val-229 to Phe-249. Residues Val-250 to Leu-273 lie on the Extracellular side of the membrane. Residues Ile-274–Val-294 traverse the membrane as a helical segment. Topologically, residues Gly-295 to Pro-354 are cytoplasmic.

This sequence belongs to the G-protein coupled receptor 1 family. Interacts with host GPRASP1; this interaction targets US28 to lysosomes for degradation. Interacts with host CX3CL1/Fractalkine (via N-terminus). Post-translationally, phosphorylated. High phosphorylation occurs concomitantly with receptor endocytosis and correlate with low receptor presence at the plasma membrane.

It localises to the host cell membrane. Functionally, receptor for a C-C type chemokine. Binds to a great number of different CC-chemokines including CCL5/RANTES, CCL2/MCP-1, CCL3/MIP-1-alpha as well as CX3CL1/Fractalkine. Transduces signals resulting in the activation of MAP kinase signaling pathways and augmentation of intracellular calcium ion levels, leading to alterations in chemotactic behavior of vascular smooth muscle cells and macrophages. The US28 receptor also exhibits high levels of agonist-independent signaling activity and agonist-independent endocytosis. Interacts with the host Gi complex without activating it, thereby probably interfering with the chemokine-Gi signaling. May also function as a G protein sink to sequester G protein from the cell surface via internalization. Interacts with endogenous Gaq/11 subunits and thereby constitutively activates phospholipase C. The chain is Envelope protein US28 (US28) from Human cytomegalovirus (strain Merlin) (HHV-5).